The primary structure comprises 560 residues: Dihydroxy-acid dehydratase (560 aa).

Position 78 (D78) interacts with Mg(2+). A [2Fe-2S] cluster-binding site is contributed by C119. Mg(2+) is bound by residues D120 and K121. K121 is modified (N6-carboxylysine). Residue C192 coordinates [2Fe-2S] cluster. A Mg(2+)-binding site is contributed by E446. The active-site Proton acceptor is the S472.

Belongs to the IlvD/Edd family. Homodimer. [2Fe-2S] cluster serves as cofactor. Requires Mg(2+) as cofactor.

It carries out the reaction (2R)-2,3-dihydroxy-3-methylbutanoate = 3-methyl-2-oxobutanoate + H2O. It catalyses the reaction (2R,3R)-2,3-dihydroxy-3-methylpentanoate = (S)-3-methyl-2-oxopentanoate + H2O. It functions in the pathway amino-acid biosynthesis; L-isoleucine biosynthesis; L-isoleucine from 2-oxobutanoate: step 3/4. It participates in amino-acid biosynthesis; L-valine biosynthesis; L-valine from pyruvate: step 3/4. Functionally, functions in the biosynthesis of branched-chain amino acids. Catalyzes the dehydration of (2R,3R)-2,3-dihydroxy-3-methylpentanoate (2,3-dihydroxy-3-methylvalerate) into 2-oxo-3-methylpentanoate (2-oxo-3-methylvalerate) and of (2R)-2,3-dihydroxy-3-methylbutanoate (2,3-dihydroxyisovalerate) into 2-oxo-3-methylbutanoate (2-oxoisovalerate), the penultimate precursor to L-isoleucine and L-valine, respectively. The protein is Dihydroxy-acid dehydratase of Anaeromyxobacter sp. (strain K).